The following is a 621-amino-acid chain: Phosphatidylinositol-3,5-bisphosphate 3-phosphatase MTMR6 (621 aa).

Positions 1 to 101 constitute a GRAM domain; it reads MEHIRTTKVE…YNSLLQLSKQ (101 aa). Residues 2–141 form an interaction with RAB1B region; the sequence is EHIRTTKVEQ…EEYKRMGVPN (140 aa). The residue at position 108 (Y108) is a Phosphotyrosine. Positions 124–499 constitute a Myotubularin phosphatase domain; sequence GWQLIDLAEE…FNFKFWRNMY (376 aa). A 1,2-diacyl-sn-glycero-3-phospho-(1D-myo-inositol-3,5-bisphosphate) contacts are provided by N248, N273, and I274. Positions 248, 273, and 274 each coordinate a 1,2-diacyl-sn-glycero-3-phospho-(1D-myo-inositol-3-phosphate). The active-site Phosphocysteine intermediate is the C336. Positions 337, 338, 339, 340, 341, 342, 378, and 382 each coordinate a 1,2-diacyl-sn-glycero-3-phospho-(1D-myo-inositol-3,5-bisphosphate). A 1,2-diacyl-sn-glycero-3-phospho-(1D-myo-inositol-3-phosphate) contacts are provided by S337, D338, G339, W340, D341, and R342. R382 lines the a 1,2-diacyl-sn-glycero-3-phospho-(1D-myo-inositol-3-phosphate) pocket. S556, S561, S589, and S611 each carry phosphoserine.

This sequence belongs to the protein-tyrosine phosphatase family. Non-receptor class myotubularin subfamily. As to quaternary structure, homodimer. Heterodimer (via C-terminus) with MTMR9 (via C-terminus). Interacts with ALKBH4. Interacts with KCNN4. Interacts (via GRAM domain) with RAB1B (in GDP-bound form); the interaction regulates MTMR6 recruitment to the endoplasmic reticulum-Golgi intermediate compartment. Expressed in CD4+ T-cells.

The protein localises to the cytoplasm. It localises to the endoplasmic reticulum-Golgi intermediate compartment. The protein resides in the endoplasmic reticulum. It is found in the cell projection. Its subcellular location is the ruffle membrane. The protein localises to the perinuclear region. It carries out the reaction a 1,2-diacyl-sn-glycero-3-phospho-(1D-myo-inositol-3,5-bisphosphate) + H2O = a 1,2-diacyl-sn-glycero-3-phospho-(1D-myo-inositol-5-phosphate) + phosphate. The enzyme catalyses a 1,2-diacyl-sn-glycero-3-phospho-(1D-myo-inositol-3-phosphate) + H2O = a 1,2-diacyl-sn-glycero-3-phospho-(1D-myo-inositol) + phosphate. The catalysed reaction is 1,2-dioctanoyl-sn-glycero-3-phospho-(1D-myo-inositol-3,5-bisphosphate) + H2O = 1,2-dioctanoyl-sn-glycero-3-phospho-(1D-myo-inositol-5-phosphate) + phosphate. It catalyses the reaction 1,2-dioctanoyl-sn-glycero-3-phospho-(1-D-myo-inositol-3-phosphate) + H2O = 1,2-dioctanoyl-sn-glycero-3-phospho-(1D-myo-inositol) + phosphate. Its activity is regulated as follows. Allosterically activated by phosphatidylserine and/or phosphatidylinositol 4-phosphate (PtdIns(4)P), and phosphatidylinositol 5-phosphate (PtdIns(5)P). Interaction with MTMR9 increases catalytic activity towards phosphatidylinositol 3,5-bisphosphate. Lipid phosphatase that specifically dephosphorylates the D-3 position of phosphatidylinositol 3-phosphate and phosphatidylinositol 3,5-bisphosphate, generating phosphatidylinositol and phosphatidylinositol 5-phosphate. Binds with high affinity to phosphatidylinositol 3,5-bisphosphate (PtdIns(3,5)P2) but also to phosphatidylinositol 3-phosphate (PtdIns(3)P), phosphatidylinositol 4-phosphate (PtdIns(4)P), and phosphatidylinositol 5-phosphate (PtdIns(5)P), phosphatidic acid and phosphatidylserine. Negatively regulates ER-Golgi protein transport. Probably in association with MTMR9, plays a role in the late stages of macropinocytosis by dephosphorylating phosphatidylinositol 3-phosphate in membrane ruffles. Acts as a negative regulator of KCNN4/KCa3.1 channel activity in CD4(+) T-cells possibly by decreasing intracellular levels of phosphatidylinositol 3-phosphate. Negatively regulates proliferation of reactivated CD4(+) T-cells. In complex with MTMR9, negatively regulates DNA damage-induced apoptosis. The formation of the MTMR6-MTMR9 complex stabilizes both MTMR6 and MTMR9 protein levels. In Homo sapiens (Human), this protein is Phosphatidylinositol-3,5-bisphosphate 3-phosphatase MTMR6.